A 633-amino-acid polypeptide reads, in one-letter code: 1-deoxy-D-xylulose-5-phosphate synthase 2 (633 aa).

Residues histidine 73 and 113–115 (SHA) each bind thiamine diphosphate. Aspartate 145 contributes to the Mg(2+) binding site. Residues 146–147 (GA), asparagine 175, tyrosine 286, and glutamate 367 each bind thiamine diphosphate. Asparagine 175 provides a ligand contact to Mg(2+).

The protein belongs to the transketolase family. DXPS subfamily. Homodimer. It depends on Mg(2+) as a cofactor. The cofactor is thiamine diphosphate.

It carries out the reaction D-glyceraldehyde 3-phosphate + pyruvate + H(+) = 1-deoxy-D-xylulose 5-phosphate + CO2. It functions in the pathway metabolic intermediate biosynthesis; 1-deoxy-D-xylulose 5-phosphate biosynthesis; 1-deoxy-D-xylulose 5-phosphate from D-glyceraldehyde 3-phosphate and pyruvate: step 1/1. Catalyzes the acyloin condensation reaction between C atoms 2 and 3 of pyruvate and glyceraldehyde 3-phosphate to yield 1-deoxy-D-xylulose-5-phosphate (DXP). In Kitasatospora griseola (Streptomyces griseolosporeus), this protein is 1-deoxy-D-xylulose-5-phosphate synthase 2.